The sequence spans 256 residues: Phosphatidylglycerol--prolipoprotein diacylglyceryl transferase (256 aa).

3 consecutive transmembrane segments (helical) span residues 19–39, 56–76, and 91–111; these read VHWY…LGYW, LIFY…MLFY, and IWEG…AAWL. Position 139 (R139) interacts with a 1,2-diacyl-sn-glycero-3-phospho-(1'-sn-glycerol). The helical transmembrane segment at 231-251 threads the bilayer; sequence FGWLTMGQVLSIPMLLIGIWL.

The protein belongs to the Lgt family.

It is found in the cell inner membrane. It catalyses the reaction L-cysteinyl-[prolipoprotein] + a 1,2-diacyl-sn-glycero-3-phospho-(1'-sn-glycerol) = an S-1,2-diacyl-sn-glyceryl-L-cysteinyl-[prolipoprotein] + sn-glycerol 1-phosphate + H(+). Its pathway is protein modification; lipoprotein biosynthesis (diacylglyceryl transfer). Functionally, catalyzes the transfer of the diacylglyceryl group from phosphatidylglycerol to the sulfhydryl group of the N-terminal cysteine of a prolipoprotein, the first step in the formation of mature lipoproteins. This chain is Phosphatidylglycerol--prolipoprotein diacylglyceryl transferase, found in Legionella pneumophila (strain Corby).